The chain runs to 147 residues: PTPN13-like protein, Y-linked (147 aa).

Expressed in testis. Detected in spermatocytes, spermatids and spermatozoa (at protein level).

The sequence is that of PTPN13-like protein, Y-linked (PRY) from Homo sapiens (Human).